Consider the following 331-residue polypeptide: Sideroflexin-5 (331 aa).

4 helical membrane passes run 104-126, 153-175, 243-265, and 278-300; these read PFGW…LLFW, YIGA…TYFI, TTMV…MPYL, and HIFV…ALAL.

Belongs to the sideroflexin family.

Its subcellular location is the mitochondrion inner membrane. The enzyme catalyses citrate(in) = citrate(out). Mitochondrial amino-acid transporter. This is Sideroflexin-5 from Caenorhabditis elegans.